Here is a 296-residue protein sequence, read N- to C-terminus: Solute carrier protein FPSE_08119 (296 aa).

A run of 3 helical transmembrane segments spans residues 12–32, 122–142, and 219–239; these read GLAA…GMVA, AGVG…VILI, and AVAA…FDFV. Solcar repeat units follow at residues 16 to 102, 114 to 205, and 213 to 296; these read LQTA…FEKE, LSFG…AKNQ, and SPPV…GPHS.

The protein belongs to the mitochondrial carrier (TC 2.A.29) family.

It localises to the mitochondrion inner membrane. Solute carrier protein; part of the Fusarium detoxification of benzoxazolinone cluster involved in the degradation of benzoxazolinones produced by the host plant. Maize, wheat, and rye produce the 2 benzoxazinone phytoanticipins 2,4-dihy-droxy-7-methoxy-1,4-benzoxazin-3-one (DIMBOA) and 2,4-dihydroxy-1,4-benzoxazin-3-one (DIBOA) that, due to their inherent instability once released, spontaneously degrade to the more stable corresponding benzoxazolinones, 6-methoxy-2-benzoxazolinone (MBOA) and 2-benzoxazolinone (BOA), respectively. The sequence is that of Solute carrier protein FPSE_08119 from Fusarium pseudograminearum (strain CS3096) (Wheat and barley crown-rot fungus).